The primary structure comprises 156 residues: MPRKGYVAKRDVLPDPMYNSKLVSRLINRLMIDGKRGTASTILYDAFDIIKEETGNEPLEVFEEAMNNIMPVLEVKARRIGGSNYQVPIEVRPERRTTLGLRWLVSYARLRGEHTMDQRLAREIMDAANNTGAAVKKREDTHKMADANRAFAHYRW.

The protein belongs to the universal ribosomal protein uS7 family. In terms of assembly, part of the 30S ribosomal subunit. Contacts proteins S9 and S11.

In terms of biological role, one of the primary rRNA binding proteins, it binds directly to 16S rRNA where it nucleates assembly of the head domain of the 30S subunit. Is located at the subunit interface close to the decoding center, probably blocks exit of the E-site tRNA. This is Small ribosomal subunit protein uS7 from Latilactobacillus sakei subsp. sakei (strain 23K) (Lactobacillus sakei subsp. sakei).